A 572-amino-acid polypeptide reads, in one-letter code: Proline--tRNA ligase (572 aa).

It belongs to the class-II aminoacyl-tRNA synthetase family. ProS type 1 subfamily. As to quaternary structure, homodimer.

The protein localises to the cytoplasm. It carries out the reaction tRNA(Pro) + L-proline + ATP = L-prolyl-tRNA(Pro) + AMP + diphosphate. In terms of biological role, catalyzes the attachment of proline to tRNA(Pro) in a two-step reaction: proline is first activated by ATP to form Pro-AMP and then transferred to the acceptor end of tRNA(Pro). As ProRS can inadvertently accommodate and process non-cognate amino acids such as alanine and cysteine, to avoid such errors it has two additional distinct editing activities against alanine. One activity is designated as 'pretransfer' editing and involves the tRNA(Pro)-independent hydrolysis of activated Ala-AMP. The other activity is designated 'posttransfer' editing and involves deacylation of mischarged Ala-tRNA(Pro). The misacylated Cys-tRNA(Pro) is not edited by ProRS. This Haemophilus influenzae (strain 86-028NP) protein is Proline--tRNA ligase.